Consider the following 322-residue polypeptide: NADH-quinone oxidoreductase subunit H (322 aa).

8 consecutive transmembrane segments (helical) span residues 14–34 (IFMH…YMSF), 81–101 (YIFV…IPVI), 114–134 (VGVL…LLAG), 149–169 (SIAQ…GIVA), 186–206 (LWNI…GMAL), 237–257 (FFIS…TLFF), 265–285 (FPPV…FVLI), and 302–322 (WKFL…YILI).

The protein belongs to the complex I subunit 1 family. NDH-1 is composed of 13 different subunits. Subunits NuoA, H, J, K, L, M, N constitute the membrane sector of the complex.

It localises to the cell inner membrane. It catalyses the reaction a quinone + NADH + 5 H(+)(in) = a quinol + NAD(+) + 4 H(+)(out). Its function is as follows. NDH-1 shuttles electrons from NADH, via FMN and iron-sulfur (Fe-S) centers, to quinones in the respiratory chain. The immediate electron acceptor for the enzyme in this species is believed to be ubiquinone. Couples the redox reaction to proton translocation (for every two electrons transferred, four hydrogen ions are translocated across the cytoplasmic membrane), and thus conserves the redox energy in a proton gradient. This subunit may bind ubiquinone. This is NADH-quinone oxidoreductase subunit H from Blochmanniella floridana.